A 627-amino-acid polypeptide reads, in one-letter code: MPIRILPPILANQIAAGEVVERPSSVVKELVENSLDAGADRVEIDIDKGGAKLIRIRDNGCGVAKDELVLALSRHATSKVATLDDLEGICSLGFRGEALASISSVSRLTFTSRTQDQSEAWQAQAEGREMNVTVKPAAHPVGTTVEVVDLFFNTPARRKFMRSEKTEFAHIDELVRRIALSRFDVTLILRHNGKVMRQYKAANTVAEQERRLAAVCGTPFMHHALAVESEHSDVRLWGWLALPEGARPQNDLQYTYVNGRMMRDKLINHAIRQAYDELLPTDRFAAYVLYIELDPHQVDVNVHPAKHEVRFHQARLIHDFIFQALFTALRREGVSAAHQEEPLAETLVELPVSGQIEYPGQAPRPEWYGAEHSYRAPASTNEVREGSAARAGNYQPPEPPSREAMRSMGALLTTLPGAGPASAASATAAMVPSAAAQTAPGVWQALTLVEQAYLLLVRDGQLALLSLVRAERLLLRNWLLEAWGQGLAAQPLLLPVSFKLPKNLIALVEAQERLLKRMGLELKSGGRDTMILTRVPALLRQTDLVRLLPELLQIIESGSDSDASQLAEVLCQWLVEQGISHEKIYDFSTANRLLTELVADFSDQLADIRMVRPVSLTTVLEAFAHDG.

Residues 376-404 (APASTNEVREGSAARAGNYQPPEPPSREA) are disordered.

This sequence belongs to the DNA mismatch repair MutL/HexB family.

This protein is involved in the repair of mismatches in DNA. It is required for dam-dependent methyl-directed DNA mismatch repair. May act as a 'molecular matchmaker', a protein that promotes the formation of a stable complex between two or more DNA-binding proteins in an ATP-dependent manner without itself being part of a final effector complex. This Aeromonas salmonicida (strain A449) protein is DNA mismatch repair protein MutL.